A 398-amino-acid polypeptide reads, in one-letter code: Lipase member N (398 aa).

A signal peptide spans M1 to A18. The AB hydrolase-1 domain maps to P79 to G379. S173 acts as the Nucleophile in catalysis. The cysteines at positions 247 and 256 are disulfide-linked. Residue N272 is glycosylated (N-linked (GlcNAc...) asparagine). Residues D344 and H373 each act as charge relay system in the active site.

The protein belongs to the AB hydrolase superfamily. Lipase family. In terms of tissue distribution, highly expressed in the epidermis in the granular keratinocytes. Also detected in other tissues, although at much lower levels, including lung and spleen.

Its subcellular location is the secreted. The enzyme catalyses a sterol ester + H2O = a sterol + a fatty acid + H(+). It carries out the reaction a triacylglycerol + H2O = a 1,2-diacylglycerol + a fatty acid + H(+). The catalysed reaction is a triacylglycerol + H2O = a diacylglycerol + a fatty acid + H(+). It catalyses the reaction a cholesterol ester + H2O = cholesterol + a fatty acid + H(+). Plays a highly specific role in the last step of keratinocyte differentiation. Contains two distinct domains: the alpha/beta hydrolase fold and the abhydrolase-associated lipase region, also features the consensus sequence of the active site of a genuine lipase. May have an essential function in lipid metabolism of the most differentiated epidermal layers. This is Lipase member N (LIPN) from Homo sapiens (Human).